Here is a 66-residue protein sequence, read N- to C-terminus: Nigrocin-2GRa (66 aa).

The signal sequence occupies residues 1–22 (MFTLKKSQLLLFFPGTINLSLC). A propeptide spanning residues 23-45 (QDETNAEEERRDEEVAKMEEIKR) is cleaved from the precursor. A disulfide bridge links Cys60 with Cys66.

In terms of tissue distribution, expressed by the skin glands.

Its subcellular location is the secreted. Functionally, antimicrobial peptide active at least against the Gram-positive bacterium S.aureus but with otherwise unclear activity spectrum. Lacks hemolytic activity against rabbit or human erythrocytes. This chain is Nigrocin-2GRa, found in Odorrana grahami (Yunnanfu frog).